The following is a 287-amino-acid chain: ATP synthase gamma chain (287 aa).

This sequence belongs to the ATPase gamma chain family. In terms of assembly, F-type ATPases have 2 components, CF(1) - the catalytic core - and CF(0) - the membrane proton channel. CF(1) has five subunits: alpha(3), beta(3), gamma(1), delta(1), epsilon(1). CF(0) has three main subunits: a, b and c.

The protein localises to the cell inner membrane. In terms of biological role, produces ATP from ADP in the presence of a proton gradient across the membrane. The gamma chain is believed to be important in regulating ATPase activity and the flow of protons through the CF(0) complex. In Shigella boydii serotype 4 (strain Sb227), this protein is ATP synthase gamma chain.